The chain runs to 405 residues: Cytochrome P450 107B1 (405 aa).

Cys352 contacts heme.

The protein belongs to the cytochrome P450 family. Requires heme as cofactor.

The protein resides in the cytoplasm. Not known, probably involved in the catabolism of octane and guaiacol. It displays a weak activity in the O-dealkylation of 7-ethoxycoumarin. The chain is Cytochrome P450 107B1 (cyp107B1) from Saccharopolyspora erythraea (strain ATCC 11635 / DSM 40517 / JCM 4748 / NBRC 13426 / NCIMB 8594 / NRRL 2338).